The sequence spans 393 residues: SET domain-containing protein DDB_G0283443 (393 aa).

The 296-residue stretch at 17 to 312 (KKIEINETLE…KGDELSISYI (296 aa)) folds into the SET domain.

This sequence belongs to the class V-like SAM-binding methyltransferase superfamily.

Its function is as follows. Probable methyltransferase. This is SET domain-containing protein DDB_G0283443 from Dictyostelium discoideum (Social amoeba).